The primary structure comprises 460 residues: ATP synthase subunit beta (460 aa).

150 to 157 (GGAGVGKT) is an ATP binding site.

Belongs to the ATPase alpha/beta chains family. In terms of assembly, F-type ATPases have 2 components, CF(1) - the catalytic core - and CF(0) - the membrane proton channel. CF(1) has five subunits: alpha(3), beta(3), gamma(1), delta(1), epsilon(1). CF(0) has three main subunits: a(1), b(2) and c(9-12). The alpha and beta chains form an alternating ring which encloses part of the gamma chain. CF(1) is attached to CF(0) by a central stalk formed by the gamma and epsilon chains, while a peripheral stalk is formed by the delta and b chains.

The protein localises to the cell inner membrane. The catalysed reaction is ATP + H2O + 4 H(+)(in) = ADP + phosphate + 5 H(+)(out). In terms of biological role, produces ATP from ADP in the presence of a proton gradient across the membrane. The catalytic sites are hosted primarily by the beta subunits. The chain is ATP synthase subunit beta from Proteus mirabilis (strain HI4320).